Reading from the N-terminus, the 669-residue chain is Thrombospondin-type laminin G domain and EAR repeat-containing protein (669 aa).

An N-terminal signal peptide occupies residues 1 to 19 (MSALLSLCFVLPLAAPGHG). The 220-residue stretch at 58 to 277 (GLQLSVAAPR…RVTLGPQPPC (220 aa)) folds into the Laminin G-like domain. EAR repeat units follow at residues 313–358 (DYVE…KWTE), 360–408 (KFVS…KWSH), 412–460 (KFTP…KWNP), 464–506 (LFEA…VHSH), 514–570 (SFQL…ELNV), 574–622 (AFVK…RWQG), and 625–668 (GFVA…RLRT). N-linked (GlcNAc...) asparagine glycosylation occurs at N320. N468, N497, N556, and N569 each carry an N-linked (GlcNAc...) asparagine glycan.

Its subcellular location is the secreted. It is found in the cell surface. The protein localises to the cell projection. It localises to the stereocilium. Functionally, plays a critical role in tooth and hair follicle morphogenesis through regulation of the Notch signaling pathway. May play a role in development or function of the auditory system. This is Thrombospondin-type laminin G domain and EAR repeat-containing protein (TSPEAR) from Homo sapiens (Human).